Reading from the N-terminus, the 657-residue chain is Probable serine/threonine-protein kinase CA_C1728 (657 aa).

One can recognise a Protein kinase domain in the interval 10 to 274 (YKIEEEIGVG…ELSNVKNNYV (265 aa)). Residues 16-24 (IGVGGTAVV) and Lys-39 each bind ATP. The active-site Proton acceptor is Asp-143. The tract at residues 286–334 (PAQIQNESNPNNKLDNDDTYYNGEPYNKEQPQEEPQEENEEPKNKIKGN) is disordered. Polar residues predominate over residues 288–298 (QIQNESNPNNK). 3 consecutive PASTA domains span residues 375 to 441 (SVSK…DISS), 443 to 509 (DTDQ…VISR), and 512 to 577 (EVKK…VIGR). The segment at 581–657 (TAVQPPNNNN…TNTPNGTGQK (77 aa)) is disordered. 3 stretches are compositionally biased toward low complexity: residues 584–600 (QPPN…QNQN), 613–637 (PTGG…PAGG), and 645–657 (GNVT…TGQK).

Belongs to the protein kinase superfamily. Ser/Thr protein kinase family.

It catalyses the reaction L-seryl-[protein] + ATP = O-phospho-L-seryl-[protein] + ADP + H(+). The catalysed reaction is L-threonyl-[protein] + ATP = O-phospho-L-threonyl-[protein] + ADP + H(+). In Clostridium acetobutylicum (strain ATCC 824 / DSM 792 / JCM 1419 / IAM 19013 / LMG 5710 / NBRC 13948 / NRRL B-527 / VKM B-1787 / 2291 / W), this protein is Probable serine/threonine-protein kinase CA_C1728.